We begin with the raw amino-acid sequence, 606 residues long: Albumin A (606 aa).

An N-terminal signal peptide occupies residues 1–18; that stretch reads MKWITLICLLISSTLIES. Residues 19–24 constitute a propeptide that is removed on maturation; it reads RIIFKR. Albumin domains lie at 22–211, 212–401, and 402–599; these read FKRD…ELMK, HSHS…RFMN, and EAKE…VLIE. His-30 contacts Cu cation. 17 disulfides stabilise this stretch: Cys-80/Cys-89, Cys-102/Cys-118, Cys-117/Cys-128, Cys-148/Cys-193, Cys-192/Cys-201, Cys-224/Cys-270, Cys-269/Cys-277, Cys-289/Cys-303, Cys-302/Cys-313, Cys-340/Cys-383, Cys-382/Cys-391, Cys-414/Cys-460, Cys-459/Cys-470, Cys-483/Cys-499, Cys-498/Cys-509, Cys-536/Cys-581, and Cys-580/Cys-589.

This sequence belongs to the ALB/AFP/VDB family. In terms of tissue distribution, plasma.

It localises to the secreted. In terms of biological role, binds water, Ca(2+), Na(+), K(+), fatty acids, hormones, bilirubin and drugs. Its main function is the regulation of the colloidal osmotic pressure of blood. The protein is Albumin A (alb-a) of Xenopus laevis (African clawed frog).